Reading from the N-terminus, the 259-residue chain is MFVPVGSEQDFPSVSTLLLPAISVGNVGQLAIDLIISTLNIPKVGYFYTDCLVPMVGNNPYETNEENAKELCTNAEVYALPSQKLAVLQLRSLVIKKKSKSFRQALVSWIKRCAFARVIFLSSCHAYHRDDKQLFGTPFRYLVTPALQKSVADVLSELEWKEMEKVSSYPELNDNEKKLFIPGGGFTKAFYNDCCLEDLQMAVVLKFCSEGDNVPDAFSLLNQVNEWLHLVEPTNGDVKWKSPRSWRLLFGSGLPPAIF.

It belongs to the PSMG2 family. In terms of assembly, forms a heterodimer with psmg1. Post-translationally, degraded by the proteasome upon completion of 20S proteasome maturation.

The protein localises to the nucleus. Functionally, chaperone protein which promotes assembly of the 20S proteasome as part of a heterodimer with psmg1. This is Proteasome assembly chaperone 2 from Xenopus laevis (African clawed frog).